A 211-amino-acid chain; its full sequence is Redox-sensing transcriptional repressor Rex (211 aa).

Positions 17–56 (LYYRLVSILKGKGIDRVNSKTISEALQIDSATIRRDFSYF) form a DNA-binding region, H-T-H motif. 91–96 (GIGNLG) contacts NAD(+).

The protein belongs to the transcriptional regulatory Rex family. As to quaternary structure, homodimer.

It is found in the cytoplasm. Functionally, modulates transcription in response to changes in cellular NADH/NAD(+) redox state. This is Redox-sensing transcriptional repressor Rex from Staphylococcus epidermidis (strain ATCC 12228 / FDA PCI 1200).